Consider the following 54-residue polypeptide: Large ribosomal subunit protein bL33A (54 aa).

This sequence belongs to the bacterial ribosomal protein bL33 family.

The protein is Large ribosomal subunit protein bL33A of Streptomyces avermitilis (strain ATCC 31267 / DSM 46492 / JCM 5070 / NBRC 14893 / NCIMB 12804 / NRRL 8165 / MA-4680).